A 364-amino-acid polypeptide reads, in one-letter code: tRNA 2-selenouridine synthase (364 aa).

Residues 14 to 137 (LLADTPLIDV…LRQTAIQATW (124 aa)) form the Rhodanese domain. The active-site S-selanylcysteine intermediate is the cysteine 97.

It belongs to the SelU family. Monomer.

The enzyme catalyses 5-methylaminomethyl-2-thiouridine(34) in tRNA + selenophosphate + (2E)-geranyl diphosphate + H2O + H(+) = 5-methylaminomethyl-2-selenouridine(34) in tRNA + (2E)-thiogeraniol + phosphate + diphosphate. The catalysed reaction is 5-methylaminomethyl-2-thiouridine(34) in tRNA + (2E)-geranyl diphosphate = 5-methylaminomethyl-S-(2E)-geranyl-thiouridine(34) in tRNA + diphosphate. It catalyses the reaction 5-methylaminomethyl-S-(2E)-geranyl-thiouridine(34) in tRNA + selenophosphate + H(+) = 5-methylaminomethyl-2-(Se-phospho)selenouridine(34) in tRNA + (2E)-thiogeraniol. It carries out the reaction 5-methylaminomethyl-2-(Se-phospho)selenouridine(34) in tRNA + H2O = 5-methylaminomethyl-2-selenouridine(34) in tRNA + phosphate. Its function is as follows. Involved in the post-transcriptional modification of the uridine at the wobble position (U34) of tRNA(Lys), tRNA(Glu) and tRNA(Gln). Catalyzes the conversion of 2-thiouridine (S2U-RNA) to 2-selenouridine (Se2U-RNA). Acts in a two-step process involving geranylation of 2-thiouridine (S2U) to S-geranyl-2-thiouridine (geS2U) and subsequent selenation of the latter derivative to 2-selenouridine (Se2U) in the tRNA chain. This Salmonella dublin (strain CT_02021853) protein is tRNA 2-selenouridine synthase.